The primary structure comprises 358 residues: Peptide chain release factor 1 (358 aa).

At Gln233 the chain carries N5-methylglutamine.

This sequence belongs to the prokaryotic/mitochondrial release factor family. In terms of processing, methylated by PrmC. Methylation increases the termination efficiency of RF1.

It is found in the cytoplasm. Peptide chain release factor 1 directs the termination of translation in response to the peptide chain termination codons UAG and UAA. This is Peptide chain release factor 1 from Beijerinckia indica subsp. indica (strain ATCC 9039 / DSM 1715 / NCIMB 8712).